The chain runs to 223 residues: Thiamine-phosphate synthase (223 aa).

Residues 42–46 and asparagine 83 contribute to the 4-amino-2-methyl-5-(diphosphooxymethyl)pyrimidine site; that span reads QLRDK. Mg(2+) is bound by residues aspartate 84 and aspartate 103. Serine 122 serves as a coordination point for 4-amino-2-methyl-5-(diphosphooxymethyl)pyrimidine. Residue 148–150 participates in 2-[(2R,5Z)-2-carboxy-4-methylthiazol-5(2H)-ylidene]ethyl phosphate binding; sequence TPT. Lysine 151 contacts 4-amino-2-methyl-5-(diphosphooxymethyl)pyrimidine. Residue glycine 179 coordinates 2-[(2R,5Z)-2-carboxy-4-methylthiazol-5(2H)-ylidene]ethyl phosphate.

This sequence belongs to the thiamine-phosphate synthase family. Mg(2+) is required as a cofactor.

The catalysed reaction is 2-[(2R,5Z)-2-carboxy-4-methylthiazol-5(2H)-ylidene]ethyl phosphate + 4-amino-2-methyl-5-(diphosphooxymethyl)pyrimidine + 2 H(+) = thiamine phosphate + CO2 + diphosphate. The enzyme catalyses 2-(2-carboxy-4-methylthiazol-5-yl)ethyl phosphate + 4-amino-2-methyl-5-(diphosphooxymethyl)pyrimidine + 2 H(+) = thiamine phosphate + CO2 + diphosphate. It catalyses the reaction 4-methyl-5-(2-phosphooxyethyl)-thiazole + 4-amino-2-methyl-5-(diphosphooxymethyl)pyrimidine + H(+) = thiamine phosphate + diphosphate. It functions in the pathway cofactor biosynthesis; thiamine diphosphate biosynthesis; thiamine phosphate from 4-amino-2-methyl-5-diphosphomethylpyrimidine and 4-methyl-5-(2-phosphoethyl)-thiazole: step 1/1. Functionally, condenses 4-methyl-5-(beta-hydroxyethyl)thiazole monophosphate (THZ-P) and 2-methyl-4-amino-5-hydroxymethyl pyrimidine pyrophosphate (HMP-PP) to form thiamine monophosphate (TMP). The polypeptide is Thiamine-phosphate synthase (Mycobacterium avium (strain 104)).